The following is a 926-amino-acid chain: Coatomer subunit beta'-2 (926 aa).

WD repeat units lie at residues 13–52, 55–94, 97–136, 140–180, 183–224, 227–266, 269–309, 351–390, and 461–501; these read QRSE…MAKS, VTEL…KVKV, AHSD…ACTQ, GHSH…PNFT, AHQK…CVQT, GHTH…LENT, YGLE…ASMD, TCDL…RSFG, and RIDV…SHFD. Residues 847 to 926 form a disordered region; that stretch reads EEESLENGDM…GTNNEGNPSA (80 aa). The span at 868–887 shows a compositional bias: basic and acidic residues; that stretch reads NEQRNEDDVAEHVEEHHEEK. The segment covering 888–900 has biased composition (acidic residues); the sequence is EAEEEEGIVDGDS. Residues 917-926 show a composition bias toward polar residues; that stretch reads GTNNEGNPSA.

It belongs to the WD repeat COPB2 family. Oligomeric complex that consists of at least the alpha, beta, beta', gamma, delta, epsilon and zeta subunits.

Its subcellular location is the cytoplasm. The protein resides in the golgi apparatus membrane. It localises to the cytoplasmic vesicle. It is found in the COPI-coated vesicle membrane. In terms of biological role, the coatomer is a cytosolic protein complex that binds to dilysine motifs and reversibly associates with Golgi non-clathrin-coated vesicles, which further mediate biosynthetic protein transport from the ER, via the Golgi up to the trans Golgi network. Coatomer complex is required for budding from Golgi membranes, and is essential for the retrograde Golgi-to-ER transport of dilysine-tagged proteins. The sequence is that of Coatomer subunit beta'-2 from Arabidopsis thaliana (Mouse-ear cress).